The chain runs to 168 residues: MLEIYEVIPAQEMQNKQTQLTVELRFDERQKSRHKTQTTCGKDLGWFIERGYVLAHGEGLQSKCGEIITVVAAKESVSEVTAENTHQLMRAAYHLGNRHVPLQVDPTKLAYLHDHVLDDMVRGLGLTVTAAQAPFTPESGAYHGTTGHGGGHSHSHGHSHDHHHDHSH.

Positions proline 137 to histidine 168 are disordered. Residues glycine 151 to aspartate 161 are compositionally biased toward basic residues.

It belongs to the UreE family.

Its subcellular location is the cytoplasm. Functionally, involved in urease metallocenter assembly. Binds nickel. Probably functions as a nickel donor during metallocenter assembly. This is Urease accessory protein UreE from Saccharophagus degradans (strain 2-40 / ATCC 43961 / DSM 17024).